A 166-amino-acid chain; its full sequence is NADPH-dependent 7-cyano-7-deazaguanine reductase (166 aa).

The Thioimide intermediate role is filled by C57. Residue D64 is the Proton donor of the active site. Residues 79–81 and 98–99 each bind substrate; these read VES and HE.

The protein belongs to the GTP cyclohydrolase I family. QueF type 1 subfamily.

It is found in the cytoplasm. The enzyme catalyses 7-aminomethyl-7-carbaguanine + 2 NADP(+) = 7-cyano-7-deazaguanine + 2 NADPH + 3 H(+). It functions in the pathway tRNA modification; tRNA-queuosine biosynthesis. Functionally, catalyzes the NADPH-dependent reduction of 7-cyano-7-deazaguanine (preQ0) to 7-aminomethyl-7-deazaguanine (preQ1). This is NADPH-dependent 7-cyano-7-deazaguanine reductase from Staphylococcus aureus (strain MRSA252).